We begin with the raw amino-acid sequence, 432 residues long: Protein RETICULATA, chloroplastic (432 aa).

A chloroplast-targeting transit peptide spans M1–R47. Positions G109–Y140 are disordered. Positions V111–E132 are enriched in gly residues. 2 helical membrane-spanning segments follow: residues L249–A269 and I322–I342.

The protein belongs to the RETICULATA family. In terms of tissue distribution, highly expressed in the vasculature of developing leaf primordia, margins of fully expanded leaves, hydathodes of rosette of cauline leaves, basal region of the lamina, stipules, root tips, stamens and in the abscission zone of the funiculus.

The protein resides in the plastid. The protein localises to the chloroplast membrane. Functionally, may play a role in leaf development. Required for leaf mesophyll cell division in the early stages of leaf organogenesis. Acts in a developmental pathway that involves PPT1/CUE1 but does not include ASE2/DOV1. The chain is Protein RETICULATA, chloroplastic from Arabidopsis thaliana (Mouse-ear cress).